We begin with the raw amino-acid sequence, 297 residues long: Nicotinate-nucleotide pyrophosphorylase [carboxylating] (297 aa).

An important for hexamer formation region spans residues leucine 8–proline 12. Quinolinate contacts are provided by residues arginine 102, arginine 138 to lysine 139, histidine 160 to arginine 161, lysine 171, glutamate 201, aspartate 222, serine 248 to glycine 250, and glycine 270.

This sequence belongs to the NadC/ModD family. As to quaternary structure, hexamer formed by 3 homodimers.

The enzyme catalyses nicotinate beta-D-ribonucleotide + CO2 + diphosphate = quinolinate + 5-phospho-alpha-D-ribose 1-diphosphate + 2 H(+). It functions in the pathway cofactor biosynthesis; NAD(+) biosynthesis; nicotinate D-ribonucleotide from quinolinate: step 1/1. Its activity is regulated as follows. Activity toward QA is slightly repressed by phosphoribosylpyrophosphate (PRPP) in both a competitive and a non-competitive manner. Competitively inhibited by phthalic acid (PHT). In terms of biological role, involved in the catabolism of quinolinic acid (QA). This is Nicotinate-nucleotide pyrophosphorylase [carboxylating] (QPRT) from Homo sapiens (Human).